A 319-amino-acid polypeptide reads, in one-letter code: NADH-ubiquinone oxidoreductase chain 1 (319 aa).

8 helical membrane passes run 5 to 25, 72 to 92, 102 to 122, 146 to 166, 173 to 193, 225 to 245, 254 to 274, and 295 to 315; these read TINS…LTLM, LLIS…TPIP, LGLL…LWAG, VTLG…TMQL, FTWL…STLA, FFLT…ILFI, ELFL…FLWI, and LPLT…TSGI.

It belongs to the complex I subunit 1 family.

The protein resides in the mitochondrion inner membrane. It catalyses the reaction a ubiquinone + NADH + 5 H(+)(in) = a ubiquinol + NAD(+) + 4 H(+)(out). In terms of biological role, core subunit of the mitochondrial membrane respiratory chain NADH dehydrogenase (Complex I) that is believed to belong to the minimal assembly required for catalysis. Complex I functions in the transfer of electrons from NADH to the respiratory chain. The immediate electron acceptor for the enzyme is believed to be ubiquinone. This is NADH-ubiquinone oxidoreductase chain 1 (MT-ND1) from Varanus flavescens (Yellow monitor).